The sequence spans 630 residues: Eukaryotic translation initiation factor 2-alpha kinase 1 (630 aa).

Positions 1–40 (MQGGNSGVRKREEEGDGAGAVAAPPAIDFPAEGPDPEYDE) are disordered. The SIFI-degron motif lies at 85 to 104 (LRSRQVFKLLCQTFIKMGLL). Positions 167–583 (FEELAILGKG…AIQLLQSELF (417 aa)) constitute a Protein kinase domain. ATP contacts are provided by residues 173–181 (LGKGGYGRV) and lysine 196. The interval 259 to 301 (DQEEDREQCGVKNDESSSSSIIFAEPTPEKEKRFGESDTENQN) is disordered. At threonine 285 the chain carries Phosphothreonine. Positions 285-294 (TPEKEKRFGE) are enriched in basic and acidic residues. One copy of the HRM 1 repeat lies at 410-415 (ACPYVM). The active-site Proton acceptor is aspartate 442. Phosphothreonine; by autocatalysis is present on residues threonine 486 and threonine 488. Threonine 493 bears the Phosphothreonine mark. One copy of the HRM 2 repeat lies at 552 to 557 (RCPVQA).

The protein belongs to the protein kinase superfamily. Ser/Thr protein kinase family. GCN2 subfamily. Synthesized in an inactive form that binds to the N-terminal domain of CDC37. Has to be associated with a multiprotein complex containing Hsp90, CDC37 and PPP5C for maturation and activation by autophosphorylation. The phosphatase PPP5C modulates this activation. Homodimer; homodimerizes in presence of heme, forming a disulfide-linked inactive homodimer. Interacts with DELE1; binds both to full-length DELE1 and processed form of DELE1 (S-DELE1) in response to stress, leading to activate its protein kinase activity and trigger the integrated stress response (ISR). Activated by autophosphorylation; phosphorylated predominantly on serine and threonine residues, but also on tyrosine residues. Autophosphorylation at Thr-488 is required for kinase activation. The active autophosphorylated form apparently is largely refractory to cellular heme fluctuations. Post-translationally, ubiquitinated and degraded by the SIFI complex once the mitochondrial stress has been resolved, thereby providing stress response silencing. Within the SIFI complex, UBR4 initiates ubiquitin chain that are further elongated or branched by KCMF1.

The enzyme catalyses L-seryl-[protein] + ATP = O-phospho-L-seryl-[protein] + ADP + H(+). It catalyses the reaction L-threonyl-[protein] + ATP = O-phospho-L-threonyl-[protein] + ADP + H(+). Its activity is regulated as follows. In normal conditions, the protein kinase activity is inhibited; inhibition is relieved by various stress conditions. Inhibited by heme: in presence of heme, forms a disulfide-linked inactive homodimer. Heme depletion relieves inhibition and stimulates kinase activity by autophosphorylation. Inhibited by the heme metabolites biliverdin and bilirubin. Induced by oxidative stress generated by arsenite treatment. Binding of nitric oxide (NO) to the heme iron in the N-terminal heme-binding domain activates the kinase activity, while binding of carbon monoxide (CO) suppresses kinase activity. Protein kinase activity is also activated upon binding to DELE1 in response to various stress, triggering the integrated stress response (ISR): activated by full-length DELE1 in response to iron deficiency, while it is activated by the processed form of DELE1 (S-DELE1) in response to mitochondrial stress. In terms of biological role, metabolic-stress sensing protein kinase that phosphorylates the alpha subunit of eukaryotic translation initiation factor 2 (EIF2S1/eIF-2-alpha) in response to various stress conditions. Key activator of the integrated stress response (ISR) required for adaptation to various stress, such as heme deficiency, oxidative stress, osmotic shock, mitochondrial dysfunction and heat shock. EIF2S1/eIF-2-alpha phosphorylation in response to stress converts EIF2S1/eIF-2-alpha in a global protein synthesis inhibitor, leading to a global attenuation of cap-dependent translation, while concomitantly initiating the preferential translation of ISR-specific mRNAs, such as the transcriptional activator ATF4, and hence allowing ATF4-mediated reprogramming. Acts as a key sensor of heme-deficiency: in normal conditions, binds hemin via a cysteine thiolate and histidine nitrogenous coordination, leading to inhibit the protein kinase activity. This binding occurs with moderate affinity, allowing it to sense the heme concentration within the cell: heme depletion relieves inhibition and stimulates kinase activity, activating the ISR. Thanks to this unique heme-sensing capacity, plays a crucial role to shut off protein synthesis during acute heme-deficient conditions. In red blood cells (RBCs), controls hemoglobin synthesis ensuring a coordinated regulation of the synthesis of its heme and globin moieties. It thereby plays an essential protective role for RBC survival in anemias of iron deficiency. Iron deficiency also triggers activation by full-length DELE1. Also activates the ISR in response to mitochondrial dysfunction: HRI/EIF2AK1 protein kinase activity is activated upon binding to the processed form of DELE1 (S-DELE1), thereby promoting the ATF4-mediated reprogramming. Also acts as an activator of mitophagy in response to mitochondrial damage: catalyzes phosphorylation of eIF-2-alpha (EIF2S1) following activation by S-DELE1, thereby promoting mitochondrial localization of EIF2S1, triggering PRKN-independent mitophagy. This is Eukaryotic translation initiation factor 2-alpha kinase 1 from Homo sapiens (Human).